The following is a 152-amino-acid chain: MLGTALRRCAVAAAAASRAGPRGLLHPAPAPGPAAAIQSIRCYSHGSHETDEEFDARWVTYFNKPDIDAWELRKGMNTLVGYDLVPEPKIIDAALRACRRLNDFASAVRILEVVKDKAGPHKEIYPYVIQELRPTLNELGISTPEELGLDKV.

The N-terminal 43 residues, 1–43 (MLGTALRRCAVAAAAASRAGPRGLLHPAPAPGPAAAIQSIRCY), are a transit peptide targeting the mitochondrion. Residues 2–22 (LGTALRRCAVAAAAASRAGPR) carry the SIFI-degron motif. 2 positions are modified to N6-acetyllysine: K89 and K115. At T143 the chain carries Phosphothreonine.

Belongs to the cytochrome c oxidase subunit 5A family. As to quaternary structure, component of the cytochrome c oxidase (complex IV, CIV), a multisubunit enzyme composed of 14 subunits. The complex is composed of a catalytic core of 3 subunits MT-CO1, MT-CO2 and MT-CO3, encoded in the mitochondrial DNA, and 11 supernumerary subunits COX4I, COX5A, COX5B, COX6A, COX6B, COX6C, COX7A, COX7B, COX7C, COX8 and NDUFA4, which are encoded in the nuclear genome. The complex exists as a monomer or a dimer and forms supercomplexes (SCs) in the inner mitochondrial membrane with NADH-ubiquinone oxidoreductase (complex I, CI) and ubiquinol-cytochrome c oxidoreductase (cytochrome b-c1 complex, complex III, CIII), resulting in different assemblies (supercomplex SCI(1)III(2)IV(1) and megacomplex MCI(2)III(2)IV(2)). Interacts with AFG1L. Interacts with RAB5IF. In response to mitochondrial stress, the precursor protein is ubiquitinated by the SIFI complex in the cytoplasm before mitochondrial import, leading to its degradation. Within the SIFI complex, UBR4 initiates ubiquitin chain that are further elongated or branched by KCMF1.

It is found in the mitochondrion inner membrane. It functions in the pathway energy metabolism; oxidative phosphorylation. Functionally, component of the cytochrome c oxidase, the last enzyme in the mitochondrial electron transport chain which drives oxidative phosphorylation. The respiratory chain contains 3 multisubunit complexes succinate dehydrogenase (complex II, CII), ubiquinol-cytochrome c oxidoreductase (cytochrome b-c1 complex, complex III, CIII) and cytochrome c oxidase (complex IV, CIV), that cooperate to transfer electrons derived from NADH and succinate to molecular oxygen, creating an electrochemical gradient over the inner membrane that drives transmembrane transport and the ATP synthase. Cytochrome c oxidase is the component of the respiratory chain that catalyzes the reduction of oxygen to water. Electrons originating from reduced cytochrome c in the intermembrane space (IMS) are transferred via the dinuclear copper A center (CU(A)) of subunit 2 and heme A of subunit 1 to the active site in subunit 1, a binuclear center (BNC) formed by heme A3 and copper B (CU(B)). The BNC reduces molecular oxygen to 2 water molecules using 4 electrons from cytochrome c in the IMS and 4 protons from the mitochondrial matrix. The protein is Cytochrome c oxidase subunit 5A, mitochondrial (COX5A) of Eulemur fulvus fulvus (Brown lemur).